A 131-amino-acid chain; its full sequence is Small ribosomal subunit protein uS9 (131 aa).

Belongs to the universal ribosomal protein uS9 family.

This chain is Small ribosomal subunit protein uS9, found in Haemophilus ducreyi (strain 35000HP / ATCC 700724).